We begin with the raw amino-acid sequence, 255 residues long: Dehydrogenase/reductase SDR family member 11 (255 aa).

An N-terminal signal peptide occupies residues 1-25 (MERWRDRLALVTGASGGIGAAVARA). NADP(+) contacts are provided by residues 13–18 (GASGGI), 38–39 (RT), Glu-44, 65–66 (DL), and Asn-92. Substrate-binding residues include Ser-146 and Tyr-161. Residues Tyr-161, Lys-165, 196–199 (VETQ), and Lys-203 each bind NADP(+). The active-site Proton acceptor is Tyr-161.

The protein belongs to the short-chain dehydrogenases/reductases (SDR) family.

The protein localises to the secreted. It catalyses the reaction a 3beta-hydroxysteroid + NADP(+) = a 3-oxosteroid + NADPH + H(+). It carries out the reaction 17beta-estradiol + NAD(+) = estrone + NADH + H(+). The enzyme catalyses 17beta-estradiol + NADP(+) = estrone + NADPH + H(+). The protein operates within steroid biosynthesis; estrogen biosynthesis. Its activity is regulated as follows. Inhibited by flavonoids including apigenin, luteolin, genistein, kaempferol and quercetin and also by carbenoxolone, zearalenone, glycyrrhetinic, curcumin and flufenamic acid. Its function is as follows. Catalyzes the conversion of the 17-keto group of estrone, 4- and 5-androstenes and 5-alpha-androstanes into their 17-beta-hydroxyl metabolites and the conversion of the 3-keto group of 3-, 3,17- and 3,20- diketosteroids into their 3-hydroxyl metabolites. Exhibits reductive 3-beta-hydroxysteroid dehydrogenase activity toward 5-beta-androstanes, 5-beta-pregnanes, 4-pregnenes and bile acids. May also reduce endogenous and exogenous alpha-dicarbonyl compounds and xenobiotic alicyclic ketones. The sequence is that of Dehydrogenase/reductase SDR family member 11 (DHRS11) from Bos taurus (Bovine).